The sequence spans 165 residues: Chorismate pyruvate-lyase (165 aa).

Substrate contacts are provided by Met-35, Arg-77, Leu-115, and Glu-156.

Belongs to the UbiC family. In terms of assembly, monomer.

It localises to the cytoplasm. The catalysed reaction is chorismate = 4-hydroxybenzoate + pyruvate. Its pathway is cofactor biosynthesis; ubiquinone biosynthesis. Removes the pyruvyl group from chorismate, with concomitant aromatization of the ring, to provide 4-hydroxybenzoate (4HB) for the ubiquinone pathway. The sequence is that of Chorismate pyruvate-lyase from Salmonella schwarzengrund (strain CVM19633).